The sequence spans 170 residues: APRG1 tumor suppressor candidate (170 aa).

A helical membrane pass occupies residues 150-170 (IALALAGPGAILILELSWFLG).

As to expression, expressed at high levels in the pancreas and placenta. In terms of tissue distribution, expressed at high levels in the kidney.

It localises to the membrane. In Homo sapiens (Human), this protein is APRG1 tumor suppressor candidate.